The primary structure comprises 227 residues: Cytochrome c oxidase subunit 2 (227 aa).

Residues 1–14 are Mitochondrial intermembrane-facing; that stretch reads MAYPMQLGFQDATS. Residues 15 to 45 traverse the membrane as a helical segment; the sequence is PIMEELLHFHDHTLMIVLLISSLVLYIISLM. The Mitochondrial matrix portion of the chain corresponds to 46–59; that stretch reads LTTKLTHTSTMDAQ. A helical membrane pass occupies residues 60–87; that stretch reads EVETIWTILPAIILILIALPSLRILYMM. The Mitochondrial intermembrane segment spans residues 88 to 227; the sequence is DEINNPSLTV…YFEKWSASML (140 aa). The Cu cation site is built by histidine 161, cysteine 196, glutamate 198, cysteine 200, histidine 204, and methionine 207. Glutamate 198 is a Mg(2+) binding site. At tyrosine 218 the chain carries Phosphotyrosine.

This sequence belongs to the cytochrome c oxidase subunit 2 family. In terms of assembly, component of the cytochrome c oxidase (complex IV, CIV), a multisubunit enzyme composed of 14 subunits. The complex is composed of a catalytic core of 3 subunits MT-CO1, MT-CO2 and MT-CO3, encoded in the mitochondrial DNA, and 11 supernumerary subunits COX4I, COX5A, COX5B, COX6A, COX6B, COX6C, COX7A, COX7B, COX7C, COX8 and NDUFA4, which are encoded in the nuclear genome. The complex exists as a monomer or a dimer and forms supercomplexes (SCs) in the inner mitochondrial membrane with NADH-ubiquinone oxidoreductase (complex I, CI) and ubiquinol-cytochrome c oxidoreductase (cytochrome b-c1 complex, complex III, CIII), resulting in different assemblies (supercomplex SCI(1)III(2)IV(1) and megacomplex MCI(2)III(2)IV(2)). Found in a complex with TMEM177, COA6, COX18, COX20, SCO1 and SCO2. Interacts with TMEM177 in a COX20-dependent manner. Interacts with COX20. Interacts with COX16. Requires Cu cation as cofactor.

Its subcellular location is the mitochondrion inner membrane. The catalysed reaction is 4 Fe(II)-[cytochrome c] + O2 + 8 H(+)(in) = 4 Fe(III)-[cytochrome c] + 2 H2O + 4 H(+)(out). Functionally, component of the cytochrome c oxidase, the last enzyme in the mitochondrial electron transport chain which drives oxidative phosphorylation. The respiratory chain contains 3 multisubunit complexes succinate dehydrogenase (complex II, CII), ubiquinol-cytochrome c oxidoreductase (cytochrome b-c1 complex, complex III, CIII) and cytochrome c oxidase (complex IV, CIV), that cooperate to transfer electrons derived from NADH and succinate to molecular oxygen, creating an electrochemical gradient over the inner membrane that drives transmembrane transport and the ATP synthase. Cytochrome c oxidase is the component of the respiratory chain that catalyzes the reduction of oxygen to water. Electrons originating from reduced cytochrome c in the intermembrane space (IMS) are transferred via the dinuclear copper A center (CU(A)) of subunit 2 and heme A of subunit 1 to the active site in subunit 1, a binuclear center (BNC) formed by heme A3 and copper B (CU(B)). The BNC reduces molecular oxygen to 2 water molecules using 4 electrons from cytochrome c in the IMS and 4 protons from the mitochondrial matrix. This is Cytochrome c oxidase subunit 2 (MT-CO2) from Bubalus depressicornis (Lowland anoa).